The following is a 204-amino-acid chain: Protein phosphatase 1 regulatory subunit 1B (204 aa).

N-acetylmethionine is present on Met-1. A disordered region spans residues 1–204; that stretch reads MDPKDRKKIQ…QRPSPSEPGT (204 aa). At Thr-34 the chain carries Phosphothreonine; by PKA. Positions 41–63 are enriched in basic and acidic residues; sequence LSEHSSPEEEASPHQRASGEGHH. Ser-45 and Ser-46 each carry phosphoserine. Residue Thr-75 is modified to Phosphothreonine; by CDK5. Residues 89-100 show a composition bias toward polar residues; that stretch reads HLQSISNLNENQ. A Phosphoserine modification is found at Ser-102. Basic and acidic residues predominate over residues 109–118; it reads GELRELGYPR. 2 stretches are compositionally biased toward acidic residues: residues 119–138 and 170–183; these read EEDE…EDSQ and DESE…DQVE. Residue Ser-137 is modified to Phosphoserine. Phosphoserine is present on Ser-198.

Belongs to the protein phosphatase inhibitor 1 family. Dopamine- and cyclic AMP-regulated neuronal phosphoprotein. In terms of processing, phosphorylation of Thr-34 is required for activity.

The protein resides in the cytoplasm. In terms of biological role, inhibitor of protein-phosphatase 1. The polypeptide is Protein phosphatase 1 regulatory subunit 1B (PPP1R1B) (Homo sapiens (Human)).